A 454-amino-acid chain; its full sequence is MNPNQKIITIGSICLVVGLISLILQIGNIISIWISHSIQTGSQNHTGICNQNIITYKNSTWVKDTTSVILTGNSSLCPIRGWAIYSKDNSIRIGSKGDVFVIREPFISCSHLECRTFFLTQGALLNDKHSNGTVKDRSPYRALMSCPVGEAPSPYNSRFESVAWSASACHDGMGWLTIGISGPDNGAVAVLKYNGIITETIKSWRKKILRTQESECACVNGSCFTIMTDGPSDGLASYKIFKIEKGKVTKSIELNAPNSHYEECSCYPDTGKVMCVCRDNWHGSNRPWVSFDQNLDYQIGYICSGVFGDNPRPEDGTGSCGPVYVDGANGVKGFSYRYGNGVWIGRTKSHSSRHGFEMIWDPNGWTETDSKFSVRQDVVAMTDWSGYSGSFVQHPELTGLDCMRPCFWVELIRGRPKEKTIWTSASSISFCGVNSDTVDWSWPDGAELPFSIDK.

Over 1 to 6 (MNPNQK) the chain is Intravirion. The chain crosses the membrane as a helical span at residues 7-27 (IITIGSICLVVGLISLILQIG). The tract at residues 11–33 (GSICLVVGLISLILQIGNIISIW) is involved in apical transport and lipid raft association. The Virion surface segment spans residues 28-454 (NIISIWISHS…GAELPFSIDK (427 aa)). The segment at 36-75 (HSIQTGSQNHTGICNQNIITYKNSTWVKDTTSVILTGNSS) is hypervariable stalk region. 3 N-linked (GlcNAc...) asparagine; by host glycosylation sites follow: asparagine 44, asparagine 58, and asparagine 73. A head of neuraminidase region spans residues 76–454 (LCPIRGWAIY…GAELPFSIDK (379 aa)). 8 cysteine pairs are disulfide-bonded: cysteine 77/cysteine 402, cysteine 109/cysteine 114, cysteine 169/cysteine 216, cysteine 218/cysteine 223, cysteine 264/cysteine 277, cysteine 266/cysteine 275, cysteine 303/cysteine 320, and cysteine 406/cysteine 431. Residue arginine 103 coordinates substrate. Asparagine 131 is a glycosylation site (N-linked (GlcNAc...) asparagine; by host). Residue aspartate 136 is the Proton donor/acceptor of the active site. Substrate is bound at residue arginine 137. An N-linked (GlcNAc...) asparagine; by host glycan is attached at asparagine 220. Position 262–263 (262–263 (EE)) interacts with substrate. Arginine 278 provides a ligand contact to substrate. Ca(2+)-binding residues include aspartate 279, glycine 283, aspartate 309, and asparagine 329. Arginine 353 serves as a coordination point for substrate. Tyrosine 387 acts as the Nucleophile in catalysis.

This sequence belongs to the glycosyl hydrolase 34 family. In terms of assembly, homotetramer. The cofactor is Ca(2+). N-glycosylated.

The protein localises to the virion membrane. It is found in the host apical cell membrane. It catalyses the reaction Hydrolysis of alpha-(2-&gt;3)-, alpha-(2-&gt;6)-, alpha-(2-&gt;8)- glycosidic linkages of terminal sialic acid residues in oligosaccharides, glycoproteins, glycolipids, colominic acid and synthetic substrates.. Inhibited by the neuraminidase inhibitors zanamivir (Relenza) and oseltamivir (Tamiflu). These drugs interfere with the release of progeny virus from infected cells and are effective against all influenza strains. Resistance to neuraminidase inhibitors is quite rare. Functionally, catalyzes the removal of terminal sialic acid residues from viral and cellular glycoconjugates. Cleaves off the terminal sialic acids on the glycosylated HA during virus budding to facilitate virus release. Additionally helps virus spread through the circulation by further removing sialic acids from the cell surface. These cleavages prevent self-aggregation and ensure the efficient spread of the progeny virus from cell to cell. Otherwise, infection would be limited to one round of replication. Described as a receptor-destroying enzyme because it cleaves a terminal sialic acid from the cellular receptors. May facilitate viral invasion of the upper airways by cleaving the sialic acid moieties on the mucin of the airway epithelial cells. Likely to plays a role in the budding process through its association with lipid rafts during intracellular transport. May additionally display a raft-association independent effect on budding. Plays a role in the determination of host range restriction on replication and virulence. Sialidase activity in late endosome/lysosome traffic seems to enhance virus replication. This is Neuraminidase from Aves (Human).